Reading from the N-terminus, the 218-residue chain is UPF0177 protein YaiF (218 aa).

5 helical membrane passes run 8-28 (SIII…AVFL), 48-68 (FIIL…KCGF), 81-101 (ILLI…VVQF), 123-143 (ILSS…APIL), and 163-183 (FFLS…DILG).

It belongs to the UPF0177 family.

The protein localises to the cell membrane. In Lactococcus lactis subsp. lactis (strain IL1403) (Streptococcus lactis), this protein is UPF0177 protein YaiF (yaiF).